The following is a 241-amino-acid chain: Carboxysome assembly protein CcmN (241 aa).

The segment at 123–206 (GASSPTTDSV…PTAPTVVTTA (84 aa)) is disordered. Over residues 185–195 (QISSNRSPGES) the composition is skewed to polar residues. Residues 196 to 206 (TPTAPTVVTTA) show a composition bias toward low complexity. The short motif at 219 to 241 (VVGQVYINQLLLTLFPERRYFSS) is the Encapsulation peptide element.

The protein belongs to the CcmN family. In terms of assembly, interacts with full-length and the N-terminal 249 residues of CcmM; a probable CcmM-CcaA-CcmN complex can also be isolated. Interacts with CcmK.

The protein localises to the carboxysome. In terms of biological role, required for carboxysome formation; the N-terminus interacts with CcmM which itself binds RuBisCO (ribulose bisphosphate carboxylase, rbcL-rbcS). May also contact shell protein CcmK to help assemble the carboxysome. Its function is as follows. Beta-carboxysome assembly initiates when soluble RuBisCO is condensed into a liquid matrix in a pre-carboxysome by the RbcS-like domains of probably both forms of CcmM. CcmN interacts with the N-terminus of full-length CcmM, and then recruits the CcmK major shell protein via CcmN's encapsulation peptide. Shell formation requires CcmK proteins and CcmO. CcmL caps the otherwise elongated carboxysome. Once fully encapsulated carboxysomes are formed, they migrate within the cell probably via interactions with the cytoskeleton. The protein is Carboxysome assembly protein CcmN of Synechocystis sp. (strain ATCC 27184 / PCC 6803 / Kazusa).